A 461-amino-acid polypeptide reads, in one-letter code: MTEKQTWSQRFESALHPAIALFNASISFDIELIEYDLTGSQAHAQMLAHTGIISPAEGEQLVAGLEQIREEYRQGKFQPGIDAEDVHFAVERRLTEIVGDVGKKLHTARSRNDQVGTDTRLYLRDQISQIKTQLREFQRVLLDIAEQNVETLIPGYTHLQRAQPVSLAHHLLAYFHMAQRDWERLGDVYRRVNISPLGCGALAGTTFPIDRHYTAKLLQFERIYENSLDGVSDRDFAIEFLCAASLIMVHLSRLSEEIILWASEEFRFVTLKDSCATGSSIMPQKKNPDVPELVRGKTGRVFGHLQAMLVIMKGLPLAYNKDLQEDKEGLFDSVNTVKACLEAMTILLQEGLEFRTQRLAEAVTQDFSNATDVADYLAARGVPFREAYNIVGKVVKTSIAAGKLLKDLTLEEWQEIHPAFATDIYEAISPRQVVAARNSYGGTGFAQVSKAVSAAREEIGE.

The protein belongs to the lyase 1 family. Argininosuccinate lyase subfamily.

The protein localises to the cytoplasm. It carries out the reaction 2-(N(omega)-L-arginino)succinate = fumarate + L-arginine. The protein operates within amino-acid biosynthesis; L-arginine biosynthesis; L-arginine from L-ornithine and carbamoyl phosphate: step 3/3. The chain is Argininosuccinate lyase from Trichormus variabilis (strain ATCC 29413 / PCC 7937) (Anabaena variabilis).